The primary structure comprises 251 residues: Flap endonuclease Xni (251 aa).

Asp-104 contacts Mg(2+). The 5'-3' exonuclease domain maps to 160–249 (VSPGQLADFW…LDGNLQQLRL (90 aa)). Leu-171, Ala-172, Pro-180, Val-182, and Ile-185 together coordinate K(+). The interaction with DNA stretch occupies residues 184–189 (GIGPKS).

The protein belongs to the Xni family. It depends on Mg(2+) as a cofactor. K(+) serves as cofactor.

Its function is as follows. Has flap endonuclease activity. During DNA replication, flap endonucleases cleave the 5'-overhanging flap structure that is generated by displacement synthesis when DNA polymerase encounters the 5'-end of a downstream Okazaki fragment. The chain is Flap endonuclease Xni from Cronobacter sakazakii (strain ATCC BAA-894) (Enterobacter sakazakii).